Consider the following 138-residue polypeptide: Cysteine desulfuration protein SufE (138 aa).

C51 serves as the catalytic Cysteine persulfide intermediate.

This sequence belongs to the SufE family. As to quaternary structure, homodimer. Interacts with SufS.

The protein resides in the cytoplasm. Its pathway is cofactor biosynthesis; iron-sulfur cluster biosynthesis. Participates in cysteine desulfuration mediated by SufS. Cysteine desulfuration mobilizes sulfur from L-cysteine to yield L-alanine and constitutes an essential step in sulfur metabolism for biosynthesis of a variety of sulfur-containing biomolecules. Functions as a sulfur acceptor for SufS, by mediating the direct transfer of the sulfur atom from the S-sulfanylcysteine of SufS, an intermediate product of cysteine desulfuration process. The protein is Cysteine desulfuration protein SufE of Escherichia coli O8 (strain IAI1).